We begin with the raw amino-acid sequence, 908 residues long: 5'-3' exoribonuclease 2 homolog (908 aa).

The segment at 263-280 adopts a CCHC-type zinc-finger fold; sequence RPCDICNGFGHEMDKCVG. Disordered regions lie at residues 409-457 and 821-908; these read RQRR…VGNY and GGNQ…YRRF. Positions 432–454 are enriched in polar residues; it reads HGSLNQSAFGASAVGPNSQQRSV. Phosphoserine is present on Ser438. Low complexity-rich tracts occupy residues 825–868 and 878–908; these read GQSY…HNQR and QRNF…YRRF.

It belongs to the 5'-3' exonuclease family. XRN2/RAT1 subfamily. As to quaternary structure, interacts with cuff and Rai1; the interaction with cuff may inhibit its role in RNA degradation.

The protein resides in the nucleus. Functionally, a 5'-3' exoribonuclease. May promote the termination of transcription by RNA polymerase II and promote RNA degradation. Involved in turnover of piRNA precursors. The protein is 5'-3' exoribonuclease 2 homolog of Drosophila melanogaster (Fruit fly).